Reading from the N-terminus, the 267-residue chain is Hydroxyethylthiazole kinase 2 (267 aa).

Met41 is a binding site for substrate. ATP-binding residues include Lys116 and Thr166. Gly193 contacts substrate.

Belongs to the Thz kinase family. Mg(2+) serves as cofactor.

It carries out the reaction 5-(2-hydroxyethyl)-4-methylthiazole + ATP = 4-methyl-5-(2-phosphooxyethyl)-thiazole + ADP + H(+). It functions in the pathway cofactor biosynthesis; thiamine diphosphate biosynthesis; 4-methyl-5-(2-phosphoethyl)-thiazole from 5-(2-hydroxyethyl)-4-methylthiazole: step 1/1. Catalyzes the phosphorylation of the hydroxyl group of 4-methyl-5-beta-hydroxyethylthiazole (THZ). This is Hydroxyethylthiazole kinase 2 from Streptococcus pneumoniae (strain JJA).